Reading from the N-terminus, the 586-residue chain is Probable zinc metalloprotease EGY3, chloroplastic (586 aa).

Residues 1–54 (MSSSSLVTSLLFSSSSSSNTATSTSSRRSFSLFSKNQYCKPSPLRRSSSLLLVR) constitute a chloroplast transit peptide. A compositionally biased stretch (basic and acidic residues) spans 62–73 (EEKAAPAAESHH). The interval 62 to 118 (EEKAAPAAESHHAGGGQDDAATASHHAVEGENGVADADGGGVKKSKEELEEEEQQEV) is disordered. A coiled-coil region spans residues 103-195 (VKKSKEELEE…NTFKALDLNK (93 aa)). The next 7 membrane-spanning stretches (helical) occupy residues 287 to 307 (LSAV…SGFF), 318 to 338 (VSDV…SEIA), 389 to 409 (ASAY…DGSL), 427 to 447 (PLLS…GNVL), 454 to 474 (VGVP…VTSL), 506 to 526 (VALG…WGLF), and 550 to 570 (YAWG…NGGG).

It belongs to the peptidase M50B family.

Its subcellular location is the plastid. The protein localises to the chloroplast membrane. Its function is as follows. Probable membrane-associated metalloprotease that may be involved in chloroplast development. The polypeptide is Probable zinc metalloprotease EGY3, chloroplastic (EGY3) (Oryza sativa subsp. indica (Rice)).